A 246-amino-acid polypeptide reads, in one-letter code: UPF0309 protein OB3413 (246 aa).

The 180-residue stretch at 33-212 (MATAVMNGNS…VLKMIEIFEE (180 aa)) folds into the SIS domain.

It belongs to the UPF0309 family.

This Oceanobacillus iheyensis (strain DSM 14371 / CIP 107618 / JCM 11309 / KCTC 3954 / HTE831) protein is UPF0309 protein OB3413.